The primary structure comprises 192 residues: Cytidylate kinase (192 aa).

Residue 12 to 20 (GLAGSGTTT) coordinates ATP.

It belongs to the cytidylate kinase family. Type 2 subfamily.

The protein resides in the cytoplasm. The enzyme catalyses CMP + ATP = CDP + ADP. The catalysed reaction is dCMP + ATP = dCDP + ADP. The polypeptide is Cytidylate kinase (Pyrococcus furiosus (strain ATCC 43587 / DSM 3638 / JCM 8422 / Vc1)).